A 184-amino-acid polypeptide reads, in one-letter code: UPF0301 protein ABSDF3201 (184 aa).

This sequence belongs to the UPF0301 (AlgH) family.

This chain is UPF0301 protein ABSDF3201, found in Acinetobacter baumannii (strain SDF).